A 473-amino-acid polypeptide reads, in one-letter code: Photosystem II CP43 reaction center protein (473 aa).

Positions 1–14 (MKILYSLRRYFHVE) are excised as a propeptide. Thr15 is modified (N-acetylthreonine). Thr15 carries the phosphothreonine modification. 5 helical membrane passes run 69-93 (LFEV…PHLA), 134-155 (LIGP…KDKN), 178-200 (KAIW…RKIT), 255-275 (KPFA…LSYS), and 291-312 (WFNN…ASQA). Residue Glu367 participates in [CaMn4O5] cluster binding. A helical membrane pass occupies residues 447–471 (RARAAAAGFEKGIDRDSEPVLYMEP).

The protein belongs to the PsbB/PsbC family. PsbC subfamily. In terms of assembly, PSII is composed of 1 copy each of membrane proteins PsbA, PsbB, PsbC, PsbD, PsbE, PsbF, PsbH, PsbI, PsbJ, PsbK, PsbL, PsbM, PsbT, PsbX, PsbY, PsbZ, Psb30/Ycf12, at least 3 peripheral proteins of the oxygen-evolving complex and a large number of cofactors. It forms dimeric complexes. It depends on Binds multiple chlorophylls and provides some of the ligands for the Ca-4Mn-5O cluster of the oxygen-evolving complex. It may also provide a ligand for a Cl- that is required for oxygen evolution. PSII binds additional chlorophylls, carotenoids and specific lipids. as a cofactor.

It localises to the plastid. It is found in the chloroplast thylakoid membrane. One of the components of the core complex of photosystem II (PSII). It binds chlorophyll and helps catalyze the primary light-induced photochemical processes of PSII. PSII is a light-driven water:plastoquinone oxidoreductase, using light energy to abstract electrons from H(2)O, generating O(2) and a proton gradient subsequently used for ATP formation. This Chara vulgaris (Common stonewort) protein is Photosystem II CP43 reaction center protein.